Reading from the N-terminus, the 754-residue chain is FAD-dependent monooxygenase ntnA (754 aa).

A helical transmembrane segment spans residues 3–23; it reads IPFKVLIIGGGVAGLTLAIML. The FAD site is built by Glu34, Gly48, and Arg109. Residue Tyr218 is part of the active site. FAD is bound by residues Asp311 and Ala324. 4 consecutive transmembrane segments (helical) span residues 446–466, 486–506, 536–556, and 563–583; these read PLAT…PWLA, AEVL…MWVI, ILPI…YYYM, and LGVA…SAVC. Asn586 carries N-linked (GlcNAc...) asparagine glycosylation. Residues 595 to 615 traverse the membrane as a helical segment; the sequence is SWWFTADFAFPVVAYLSGMFL. N-linked (GlcNAc...) asparagine glycosylation is present at Asn616. Transmembrane regions (helical) follow at residues 644–664 and 679–697; these read IAFV…TTIL and LASL…AWEL. Asn701 carries an N-linked (GlcNAc...) asparagine glycan. The helical transmembrane segment at 712-732 threads the bilayer; that stretch reads LTILSSTIFGGPAATLAGTFI.

It belongs to the paxM FAD-dependent monooxygenase family. FAD is required as a cofactor.

The protein localises to the membrane. The protein operates within secondary metabolite biosynthesis; terpenoid biosynthesis. Its function is as follows. FAD-dependent monooxygenase; part of the gene cluster that mediates the biosynthesis of the meroterpenoids nectripenoids A and B, as well as cochliquninone D and isocochliquninone E. The pathway probably begins with the HR-PKS ntnH that catalyzes two chain-extension steps to form a reduced triketide, which then primes the SAT domain in the NR-PKS ntnG to initiate three more cycles of extension to give a linear hexaketide corresponding to the polyketide part of nectripenoids. The FAD-dependent monooxygenase ntnJ then performs an oxidative decarboxylation at C11 of the ntnH/ntnG product, via an electrophilic aromatic hydroxylation with concomitant ipso-decarboxylation. The membrane-bound polyprenyl transferase ntnF then introduces a farnesyl group before the FAD-dependent monooxygenase ntnK functions as the first epoxidase on terminal C12'-C13' olefin, followed by a second epoxidation on C7'-C8' catalyzed by ntnA. The terpene cyclase/mutase ntnI then initiates the sequential tricyclic ring formation through protonation of the terminal epoxide and catalyzes the regioselective and stereoselective 6/6/6-tricyclic ring formation. The cytochrome P450 monooxygenase ntnM may then hydroxylate C1'. The protein is FAD-dependent monooxygenase ntnA of Nectria sp.